Here is a 318-residue protein sequence, read N- to C-terminus: DNA repair nuclease/redox regulator APEX1 (318 aa).

Residues 1–33 form a necessary for interaction with YBX1, binding to RNA, association together with NPM1 to rRNA, endoribonuclease activity on abasic RNA and localization in the nucleoli region; that stretch reads MPKRGKKGAVAEDGDELKTEPEAKKSKTAAKKN. The segment at 1–60 is disordered; that stretch reads MPKRGKKGAVAEDGDELKTEPEAKKSKTAAKKNDKEAAGEGPALYEDPPDQKTSPSGKPA. Lys-6 and Lys-7 each carry N6-acetyllysine; by EP300. The Nuclear localization signal (NLS) motif lies at 8–13; it reads GAVAED. Residues 16–38 show a composition bias toward basic and acidic residues; it reads ELKTEPEAKKSKTAAKKNDKEAA. Residues 23 to 33 are necessary for interaction with NPM1 and for efficient rRNA binding; that stretch reads AKKSKTAAKKN. N6-acetyllysine occurs at positions 27, 31, 32, and 35. At Ser-54 the chain carries Phosphoserine. The Nuclear export signal (NES) signature appears at 64-80; the sequence is ICSWNVDGLRAWIKKKG. The residue at position 65 (Cys-65) is an S-nitrosocysteine; alternate. Cys-65 and Cys-93 are oxidised to a cystine. Asp-70 is a binding site for Mg(2+). Cys-93 bears the S-nitrosocysteine; alternate mark. Mg(2+) is bound at residue Glu-96. Residue Tyr-171 is part of the active site. Lys-197 carries the N6-acetyllysine modification. The Mg(2+) site is built by Asp-210 and Asn-212. Asp-210 (proton donor/acceptor) is an active-site residue. Thr-233 is modified (phosphothreonine; by CDK5). The tract at residues 289 to 318 is mitochondrial targeting sequence (MTS); that stretch reads HSLLPALCDSKIRSKALGSDHCPITLYLAL. Asp-308 provides a ligand contact to Mg(2+). Cys-310 is subject to S-nitrosocysteine.

It belongs to the DNA repair enzymes AP/ExoA family. In terms of assembly, monomer. Homodimer; disulfide-linked. Component of the SET complex, composed of at least APEX1, SET, ANP32A, HMGB2, NME1 and TREX1. Associates with the dimer XRCC5/XRCC6 in a DNA-dependent manner. Interacts with SIRT1; the interaction is increased in the context of genotoxic stress. Interacts with HDAC1, HDAC2 and HDAC3; the interactions are not dependent on the APEX1 acetylation status. Interacts with XRCC1; the interaction is induced by SIRT1 and increased with the APEX1 acetylated form. Interacts with NPM1 (via N-terminal domain); the interaction is RNA-dependent and decreases in hydrogen peroxide-damaged cells. Interacts (via N-terminus) with YBX1 (via C-terminus); the interaction is increased in presence of APEX1 acetylated at Lys-6 and Lys-7. Interacts with HNRNPL; the interaction is DNA-dependent. Interacts (via N-terminus) with KPNA1 and KPNA2. Interacts with TXN; the interaction stimulates the FOS/JUN AP-1 complex DNA-binding activity in a redox-dependent manner. Interacts with GZMA, KRT8, MDM2, POLB, PRDX6, PRPF19, RPLP0, TOMM20 and WDR77. Binds to CDK5. Requires Mg(2+) as cofactor. It depends on Mn(2+) as a cofactor. In terms of processing, phosphorylated. Phosphorylation by kinase PKC or casein kinase CK2 results in enhanced redox activity that stimulates binding of the FOS/JUN AP-1 complex to its cognate binding site. AP-endodeoxyribonuclease activity is not affected by CK2-mediated phosphorylation. Phosphorylation of Thr-233 by CDK5 in response to MPP(+)/MPTP (1-methyl-4-phenylpyridinium) reduces AP-endodeoxyribonuclease activity resulting in accumulation of DNA damage and contributing to neuronal death. Acetylated on Lys-6 and Lys-7. Acetylation is increased by the transcriptional coactivator EP300 acetyltransferase, genotoxic agents like H(2)O(2) and methyl methanesulfonate (MMS). Acetylation increases its binding affinity to the negative calcium response element (nCaRE) DNA promoter. The acetylated form induces a stronger binding of YBX1 to the Y-box sequence in the MDR1 promoter than the unacetylated form. Deacetylated on lysines. Lys-6 and Lys-7 are deacetylated by SIRT1. Post-translationally, cleaved at Lys-31 by granzyme A to create the mitochondrial form; leading in reduction of binding to DNA, AP endodeoxyribonuclease activity, redox activation of transcription factors and to enhanced cell death. Cleaved by granzyme K; leading to intracellular ROS accumulation and enhanced cell death after oxidative stress. In terms of processing, cys-69 and Cys-93 are nitrosylated in response to nitric oxide (NO) and lead to the exposure of the nuclear export signal (NES). Ubiquitinated by MDM2; leading to translocation to the cytoplasm and proteasomal degradation.

It localises to the nucleus. It is found in the nucleolus. The protein localises to the nucleus speckle. Its subcellular location is the endoplasmic reticulum. The protein resides in the cytoplasm. It localises to the mitochondrion. It catalyses the reaction Exonucleolytic cleavage in the 3'- to 5'-direction to yield nucleoside 5'-phosphates.. Its activity is regulated as follows. NPM1 stimulates endodeoxyribonuclease activity on double-stranded DNA with AP sites, but inhibits endoribonuclease activity on single-stranded RNA containing AP sites. Multifunctional protein that plays a central role in the cellular response to oxidative stress. The two major activities of APEX1 are DNA repair and redox regulation of transcriptional factors. Functions as an apurinic/apyrimidinic (AP) endodeoxyribonuclease in the DNA base excision repair (BER) pathway of DNA lesions induced by oxidative and alkylating agents. Initiates repair of AP sites in DNA by catalyzing hydrolytic incision of the phosphodiester backbone immediately adjacent to the damage, generating a single-strand break with 5'-deoxyribose phosphate and 3'-hydroxyl ends. Also incises at AP sites in the DNA strand of DNA/RNA hybrids, single-stranded DNA regions of R-loop structures, and single-stranded RNA molecules. Has 3'-5' exoribonuclease activity on mismatched deoxyribonucleotides at the 3' termini of nicked or gapped DNA molecules during short-patch BER. Possesses DNA 3' phosphodiesterase activity capable of removing lesions (such as phosphoglycolate) blocking the 3' side of DNA strand breaks. May also play a role in the epigenetic regulation of gene expression by participating in DNA demethylation. Acts as a loading factor for POLB onto non-incised AP sites in DNA and stimulates the 5'-terminal deoxyribose 5'-phosphate (dRp) excision activity of POLB. Plays a role in the protection from granzyme-mediated cellular repair leading to cell death. Also involved in the DNA cleavage step of class switch recombination (CSR). On the other hand, APEX1 also exerts reversible nuclear redox activity to regulate DNA binding affinity and transcriptional activity of transcriptional factors by controlling the redox status of their DNA-binding domain, such as the FOS/JUN AP-1 complex after exposure to IR. Involved in calcium-dependent down-regulation of parathyroid hormone (PTH) expression by binding to negative calcium response elements (nCaREs). Together with HNRNPL or the dimer XRCC5/XRCC6, associates with nCaRE, acting as an activator of transcriptional repression. Stimulates the YBX1-mediated MDR1 promoter activity, when acetylated at Lys-6 and Lys-7, leading to drug resistance. Also acts as an endoribonuclease involved in the control of single-stranded RNA metabolism. Plays a role in regulating MYC mRNA turnover by preferentially cleaving in between UA and CA dinucleotides of the MYC coding region determinant (CRD). In association with NMD1, plays a role in the rRNA quality control process during cell cycle progression. Associates, together with YBX1, on the MDR1 promoter. Together with NPM1, associates with rRNA. Binds DNA and RNA. The polypeptide is DNA repair nuclease/redox regulator APEX1 (APEX1) (Gorilla gorilla gorilla (Western lowland gorilla)).